The sequence spans 289 residues: MNLYFLFFISTILAAKPFNSFNKTSLIDEGVDNDDDIVSKRAVVIDYCDTRHPNNLCKKYFEIDSYWNDDTDCFTNIGCKVYGGFDIIGGKAPKIGTVCRLKKGKNKFGYCNSKGNCVERDFIESFGVSIKIKGISHRGDDEPACPLYENTWINYGKCNEPYHCGTNYGLFYANKRKLNYFPDNGQKCNSKYEIYGVCYLGRCHGTGNFSNGEVFSEFGTIFKDVEIVTLSDGKNSSKRGKHKNLHGSKVFDSNGIYDIDPKNWKIEDDDKDITVHENAGDPKSDSRRC.

Residues 1–14 (MNLYFLFFISTILA) form the signal peptide. Residues 15–27 (AKPFNSFNKTSLI) constitute a propeptide that is removed on maturation. Positions 270–289 (DKDITVHENAGDPKSDSRRC) are disordered.

Post-translationally, contains several disulfide bonds. As to expression, posterior glands which appear to be connected with the stylet through a series of ducts.

The protein resides in the secreted. In terms of biological role, has contracting-paralyzing activity in insect larvae. This Pyemotes tritici (Straw itch mite) protein is Toxin tox21A.